Consider the following 206-residue polypeptide: Casparian strip membrane protein 1 (206 aa).

Residue alanine 2 is modified to N-acetylalanine. Over 2-43 (AKESTTIDVGEPSTVTKSSSHVVKDAKKKGFVAVASRGGAKR) the chain is Cytoplasmic. A helical transmembrane segment spans residues 44–64 (GLAIFDFLLRLAAIAVTIGAA). The Extracellular segment spans residues 65–95 (SVMYTAEETLPFFTQFLQFQAGYDDLPAFQY). Residues 96 to 116 (FVIAVAVVASYLVLSLPFSIV) traverse the membrane as a helical segment. At 117–127 (SIVRPHAVAPR) the chain is on the cytoplasmic side. Residues 128–148 (LILLICDTLVVTLNTSAAAAA) form a helical membrane-spanning segment. The Extracellular segment spans residues 149 to 180 (ASITYLAHNGNQSTNWLPICQQFGDFCQNVST). 2 N-linked (GlcNAc...) asparagine glycosylation sites follow: asparagine 159 and asparagine 177. The helical transmembrane segment at 181-201 (AVVADSIAILFFIVLIIISAI) threads the bilayer. Residues 202 to 206 (ALKRH) lie on the Cytoplasmic side of the membrane.

It belongs to the Casparian strip membrane proteins (CASP) family. Homodimer and heterodimers with other CASP proteins. Interacts with CASP2, CASP3, CASP4 and CASP5.

It localises to the cell membrane. In terms of biological role, regulates membrane-cell wall junctions and localized cell wall deposition. Required for establishment of the Casparian strip membrane domain (CSD) and the subsequent formation of Casparian strips, a cell wall modification of the root endodermis that determines an apoplastic barrier between the intraorganismal apoplasm and the extraorganismal apoplasm and prevents lateral diffusion. In Arabidopsis thaliana (Mouse-ear cress), this protein is Casparian strip membrane protein 1 (CASP1).